Here is a 99-residue protein sequence, read N- to C-terminus: UPF0235 protein ASA_3628 (99 aa).

It belongs to the UPF0235 family.

This Aeromonas salmonicida (strain A449) protein is UPF0235 protein ASA_3628.